The chain runs to 100 residues: Large ribosomal subunit protein uL23 (100 aa).

The protein belongs to the universal ribosomal protein uL23 family. In terms of assembly, part of the 50S ribosomal subunit. Contacts protein L29, and trigger factor when it is bound to the ribosome.

One of the early assembly proteins it binds 23S rRNA. One of the proteins that surrounds the polypeptide exit tunnel on the outside of the ribosome. Forms the main docking site for trigger factor binding to the ribosome. In Thermotoga sp. (strain RQ2), this protein is Large ribosomal subunit protein uL23.